The primary structure comprises 531 residues: RNA-binding protein RO60 (531 aa).

Residues 24 to 360 (VRNNAGGFVY…AFGNVQPANT (337 aa)) form the TROVE domain. An RNA-binding region spans residues 128-274 (RTGTMLLHFL…TNGLTWLLRN (147 aa)). A VWFA-like domain region spans residues 352–531 (FGNVQPANTR…VMTAFARGEV (180 aa)). A divalent metal cation-binding residues include serine 369, serine 371, and threonine 438.

It belongs to the Ro 60 kDa family. In terms of assembly, forms oligomers upon binding DrY RNA, The multimers are of an average size of 700 kDa and are composed of around 12 molecules of Rsr-DrY RNA.

The protein resides in the cytoplasm. Its function is as follows. Binds to several small RNAs that accumulate during recovery from UV irradiation. Contributes to the resistance of D.radiodurans to ultraviolet irradiation. The polypeptide is RNA-binding protein RO60 (Deinococcus radiodurans (strain ATCC 13939 / DSM 20539 / JCM 16871 / CCUG 27074 / LMG 4051 / NBRC 15346 / NCIMB 9279 / VKM B-1422 / R1)).